A 329-amino-acid polypeptide reads, in one-letter code: Isopenicillin N synthase (329 aa).

Arg87, Tyr91, and Tyr189 together coordinate isopenicillin N. N-[(5S)-5-amino-5-carboxypentanoyl]-L-cysteinyl-D-valine-binding residues include Arg87, Tyr91, Tyr189, His212, and Asp214. The Fe2OG dioxygenase domain occupies 180–286 (TLSAVTLIHY…RLSLPFFLHA (107 aa)). His212, Asp214, and His268 together coordinate Fe(2+). Residue Arg277 coordinates 2-oxoglutarate. Ser279 provides a ligand contact to isopenicillin N. Ser279 lines the N-[(5S)-5-amino-5-carboxypentanoyl]-L-cysteinyl-D-valine pocket.

This sequence belongs to the iron/ascorbate-dependent oxidoreductase family. Fe cation serves as cofactor. L-ascorbate is required as a cofactor.

It carries out the reaction N-[(5S)-5-amino-5-carboxypentanoyl]-L-cysteinyl-D-valine + O2 = isopenicillin N + 2 H2O. Its pathway is antibiotic biosynthesis; penicillin G biosynthesis; penicillin G from L-alpha-aminoadipate and L-cysteine and L-valine: step 2/3. Removes, in the presence of oxygen, 4 hydrogen atoms from delta-L-(alpha-aminoadipyl)-L-cysteinyl-D-valine (ACV) to form the azetidinone and thiazolidine rings of isopenicillin. This Streptomyces griseus protein is Isopenicillin N synthase (pcbC).